Reading from the N-terminus, the 366-residue chain is Chorismate synthase (366 aa).

NADP(+) contacts are provided by Arg-48 and Arg-54. Residues 125–127, 238–239, Gly-278, 293–297, and Arg-319 contribute to the FMN site; these read RSS, NA, and KPTSS.

The protein belongs to the chorismate synthase family. In terms of assembly, homotetramer. It depends on FMNH2 as a cofactor.

It carries out the reaction 5-O-(1-carboxyvinyl)-3-phosphoshikimate = chorismate + phosphate. It functions in the pathway metabolic intermediate biosynthesis; chorismate biosynthesis; chorismate from D-erythrose 4-phosphate and phosphoenolpyruvate: step 7/7. Catalyzes the anti-1,4-elimination of the C-3 phosphate and the C-6 proR hydrogen from 5-enolpyruvylshikimate-3-phosphate (EPSP) to yield chorismate, which is the branch point compound that serves as the starting substrate for the three terminal pathways of aromatic amino acid biosynthesis. This reaction introduces a second double bond into the aromatic ring system. The chain is Chorismate synthase from Pseudoalteromonas atlantica (strain T6c / ATCC BAA-1087).